The sequence spans 212 residues: Uridine kinase (212 aa).

ATP is bound at residue 13 to 20; sequence GASASGKS.

This sequence belongs to the uridine kinase family.

It localises to the cytoplasm. The catalysed reaction is uridine + ATP = UMP + ADP + H(+). It carries out the reaction cytidine + ATP = CMP + ADP + H(+). The protein operates within pyrimidine metabolism; CTP biosynthesis via salvage pathway; CTP from cytidine: step 1/3. It participates in pyrimidine metabolism; UMP biosynthesis via salvage pathway; UMP from uridine: step 1/1. The polypeptide is Uridine kinase (Shewanella halifaxensis (strain HAW-EB4)).